Here is a 346-residue protein sequence, read N- to C-terminus: Flap endonuclease 1 (346 aa).

Positions 1–102 (MGVTELGKLI…LEIEQRKKAK (102 aa)) are N-domain. Residues aspartate 31, aspartate 84, glutamate 156, glutamate 158, aspartate 177, aspartate 179, and aspartate 239 each coordinate Mg(2+). The tract at residues 120–261 (DVAKYAKRAI…KALKLIWEFG (142 aa)) is I-domain.

This sequence belongs to the XPG/RAD2 endonuclease family. FEN1 subfamily. As to quaternary structure, interacts with PCNA. PCNA stimulates the nuclease activity without altering cleavage specificity. Mg(2+) serves as cofactor.

Functionally, structure-specific nuclease with 5'-flap endonuclease and 5'-3' exonuclease activities involved in DNA replication and repair. During DNA replication, cleaves the 5'-overhanging flap structure that is generated by displacement synthesis when DNA polymerase encounters the 5'-end of a downstream Okazaki fragment. Binds the unpaired 3'-DNA end and kinks the DNA to facilitate 5' cleavage specificity. Cleaves one nucleotide into the double-stranded DNA from the junction in flap DNA, leaving a nick for ligation. Also involved in the base excision repair (BER) pathway. Acts as a genome stabilization factor that prevents flaps from equilibrating into structures that lead to duplications and deletions. Also possesses 5'-3' exonuclease activity on nicked or gapped double-stranded DNA. The polypeptide is Flap endonuclease 1 (Pyrobaculum calidifontis (strain DSM 21063 / JCM 11548 / VA1)).